Here is a 386-residue protein sequence, read N- to C-terminus: Eukaryotic translation initiation factor 3 subunit M (386 aa).

Residues 181–343 (NSELASKVMI…RKVHISSTMH (163 aa)) enclose the PCI domain.

Belongs to the eIF-3 subunit M family. In terms of assembly, component of the eukaryotic translation initiation factor 3 (eIF-3) complex.

The protein localises to the cytoplasm. In terms of biological role, component of the eukaryotic translation initiation factor 3 (eIF-3) complex, which is involved in protein synthesis of a specialized repertoire of mRNAs and, together with other initiation factors, stimulates binding of mRNA and methionyl-tRNAi to the 40S ribosome. The eIF-3 complex specifically targets and initiates translation of a subset of mRNAs involved in cell proliferation. The protein is Eukaryotic translation initiation factor 3 subunit M of Culex quinquefasciatus (Southern house mosquito).